We begin with the raw amino-acid sequence, 183 residues long: Large ribosomal subunit protein uL5 (183 aa).

Belongs to the universal ribosomal protein uL5 family. Part of the 50S ribosomal subunit; part of the 5S rRNA/L5/L18/L25 subcomplex. Contacts the 5S rRNA and the P site tRNA. Forms a bridge to the 30S subunit in the 70S ribosome.

Its function is as follows. This is one of the proteins that bind and probably mediate the attachment of the 5S RNA into the large ribosomal subunit, where it forms part of the central protuberance. In the 70S ribosome it contacts protein S13 of the 30S subunit (bridge B1b), connecting the 2 subunits; this bridge is implicated in subunit movement. Contacts the P site tRNA; the 5S rRNA and some of its associated proteins might help stabilize positioning of ribosome-bound tRNAs. The protein is Large ribosomal subunit protein uL5 of Tropheryma whipplei (strain TW08/27) (Whipple's bacillus).